We begin with the raw amino-acid sequence, 105 residues long: DNA-directed RNA polymerase subunit omega (105 aa).

The protein belongs to the RNA polymerase subunit omega family. As to quaternary structure, the RNAP catalytic core consists of 2 alpha, 1 beta, 1 beta' and 1 omega subunit. When a sigma factor is associated with the core the holoenzyme is formed, which can initiate transcription.

The catalysed reaction is RNA(n) + a ribonucleoside 5'-triphosphate = RNA(n+1) + diphosphate. Its function is as follows. Promotes RNA polymerase assembly. Latches the N- and C-terminal regions of the beta' subunit thereby facilitating its interaction with the beta and alpha subunits. In Streptococcus equi subsp. zooepidemicus (strain MGCS10565), this protein is DNA-directed RNA polymerase subunit omega.